The chain runs to 159 residues: Phosphopantetheine adenylyltransferase (159 aa).

Thr-10 provides a ligand contact to substrate. ATP contacts are provided by residues 10-11 (TF) and His-18. Positions 42, 74, and 88 each coordinate substrate. ATP is bound by residues 89 to 91 (GLR), Glu-99, and 124 to 130 (WSFISSS).

Belongs to the bacterial CoaD family. As to quaternary structure, homohexamer. Requires Mg(2+) as cofactor.

Its subcellular location is the cytoplasm. It catalyses the reaction (R)-4'-phosphopantetheine + ATP + H(+) = 3'-dephospho-CoA + diphosphate. Its pathway is cofactor biosynthesis; coenzyme A biosynthesis; CoA from (R)-pantothenate: step 4/5. Functionally, reversibly transfers an adenylyl group from ATP to 4'-phosphopantetheine, yielding dephospho-CoA (dPCoA) and pyrophosphate. In Salmonella arizonae (strain ATCC BAA-731 / CDC346-86 / RSK2980), this protein is Phosphopantetheine adenylyltransferase.